Consider the following 217-residue polypeptide: MTTIAIVDYGVGNLRSVAQALRAAAPEADVRVVDAPEGIRSADRVVLPGQGAMPDCMSALGASGLQEAVIEAAASKPMFGVCVGEQMLFESSSEARPGTDKTPCLGLMPGEVIRFELDGMTQPDGSRYKVPQMGWNRVKQSRPHPLWDGIPDESWFYFVHSYFVRAQDPAHIAGETEYGVVFTSAVARDNIFATQFHPEKSAAMGLQLYRNFVHWNP.

A Glutamine amidotransferase type-1 domain is found at 3 to 217 (TIAIVDYGVG…LYRNFVHWNP (215 aa)). C82 (nucleophile) is an active-site residue. Catalysis depends on residues H197 and E199.

In terms of assembly, heterodimer of HisH and HisF.

Its subcellular location is the cytoplasm. The catalysed reaction is 5-[(5-phospho-1-deoxy-D-ribulos-1-ylimino)methylamino]-1-(5-phospho-beta-D-ribosyl)imidazole-4-carboxamide + L-glutamine = D-erythro-1-(imidazol-4-yl)glycerol 3-phosphate + 5-amino-1-(5-phospho-beta-D-ribosyl)imidazole-4-carboxamide + L-glutamate + H(+). It carries out the reaction L-glutamine + H2O = L-glutamate + NH4(+). Its pathway is amino-acid biosynthesis; L-histidine biosynthesis; L-histidine from 5-phospho-alpha-D-ribose 1-diphosphate: step 5/9. In terms of biological role, IGPS catalyzes the conversion of PRFAR and glutamine to IGP, AICAR and glutamate. The HisH subunit catalyzes the hydrolysis of glutamine to glutamate and ammonia as part of the synthesis of IGP and AICAR. The resulting ammonia molecule is channeled to the active site of HisF. The chain is Imidazole glycerol phosphate synthase subunit HisH from Cupriavidus pinatubonensis (strain JMP 134 / LMG 1197) (Cupriavidus necator (strain JMP 134)).